The primary structure comprises 1187 residues: Tyrosine-protein phosphatase non-receptor type 14 (1187 aa).

The region spanning 21-306 is the FERM domain; it reads FVTRIRLLDS…TRHKFYKQNK (286 aa). 3 positions are modified to phosphoserine: serine 314, serine 461, and serine 486. A compositionally biased stretch (polar residues) spans 510 to 524; that stretch reads LVSPSDQRNPKNNVV. The interval 510-531 is disordered; the sequence is LVSPSDQRNPKNNVVPSKPGAS. Phosphoserine is present on residues serine 591, serine 593, serine 594, and serine 642. Disordered regions lie at residues 671–690 and 787–824; these read LREQ…PQLP and KAIS…KKEP. Residues 815-824 show a composition bias toward basic and acidic residues; that stretch reads SVKERVKKEP. Serine 831 bears the Phosphoserine mark. A Tyrosine-protein phosphatase domain is found at 909 to 1180; that stretch reads VFTEYEQIPK…KFVYQVLIQF (272 aa). Substrate is bound by residues aspartate 1079, 1121–1127, and glutamine 1165; that span reads CSAGVGR. The Phosphocysteine intermediate role is filled by cysteine 1121.

It belongs to the protein-tyrosine phosphatase family. Non-receptor class subfamily. In terms of assembly, interacts with FLT4; the interaction is enhanced by stimulation with VEGFC. Interacts (via PPxY motifs) with YAP1 (via WW domains); this interaction leads to the cytoplasmic sequestration of YAP1 and inhibits its transcriptional co-activator activity. Ubiquitinated by the ECS (Elongin BC-CUL2/5-SOCS-box protein)/LRR1 E3 ligase complex and subsequently targeted to proteasomal degradation. As to expression, ubiquitous.

The protein resides in the cytoplasm. Its subcellular location is the cytoskeleton. It is found in the nucleus. It catalyses the reaction O-phospho-L-tyrosyl-[protein] + H2O = L-tyrosyl-[protein] + phosphate. In terms of biological role, protein tyrosine phosphatase which may play a role in the regulation of lymphangiogenesis, cell-cell adhesion, cell-matrix adhesion, cell migration, cell growth and also regulates TGF-beta gene expression, thereby modulating epithelial-mesenchymal transition. Mediates beta-catenin dephosphorylation at adhesion junctions. Acts as a negative regulator of the oncogenic property of YAP, a downstream target of the hippo pathway, in a cell density-dependent manner. May function as a tumor suppressor. The polypeptide is Tyrosine-protein phosphatase non-receptor type 14 (PTPN14) (Homo sapiens (Human)).